The following is a 119-amino-acid chain: Movement protein TGB2 (119 aa).

Topologically, residues 1–13 are cytoplasmic; it reads MVRNNEIGARPNK. Residues 14 to 34 traverse the membrane as a helical segment; that stretch reads YWPVVAAVVAICLFGFLTVTN. Topologically, residues 35 to 79 are lumenal; it reads QKHATQSGDNIHKFANGGQYRDGSKSIKYNCNNPRAYNGSSSNIT. The chain crosses the membrane as a helical span at residues 80–100; sequence FSQLFLPVLLIGAALYAYLWF. Over 101–119 the chain is Cytoplasmic; that stretch reads TRPDCSVTCRGDCCRSYGG.

It belongs to the virgaviridae/benyvirus TGB2 movement protein family. As to quaternary structure, interacts with movement protein TGB3. TGB1-TGB3-TGB2 complex formation is enhanced by ATP hydrolysis.

It localises to the host cell junction. The protein localises to the host plasmodesma. Its subcellular location is the host endoplasmic reticulum membrane. The protein resides in the host cytoplasm. It is found in the host cytoskeleton. It localises to the host chloroplast envelope. Functionally, participates in the transport of viral genome to neighboring plant cells directly through plasmodesmata, without any budding. TGBp2 and TGBp3 are necessary for intracellular delivery of TGBp1-containing vRNPs to plasmodesmata. Can gate plasmodesmata and increase their size exclusion limit. To a lesser extent than TGB3, induces host actin cytoskeleton network thickening, which probably plays a major role in virus cell-to-cell movement. Binds ssRNA in a sequence non-specific manner. This Potato mop-top virus (isolate Potato/Sweden/Sw) (PMTV) protein is Movement protein TGB2.